The primary structure comprises 65 residues: UPF0434 protein VFMJ11_A0475 (65 aa).

The protein belongs to the UPF0434 family.

The sequence is that of UPF0434 protein VFMJ11_A0475 from Aliivibrio fischeri (strain MJ11) (Vibrio fischeri).